The sequence spans 326 residues: Apoptosis facilitator Bcl-2-like protein 14 (326 aa).

Serine 44 carries the phosphoserine modification. A disordered region spans residues 100–147 (AEKEEDSQSSPPEICAQAQRSGVPQARPRSPKWPRSRSSMDQRLEHKA). Residues 137 to 147 (SSMDQRLEHKA) show a composition bias toward basic and acidic residues. The BH3 signature appears at 211 to 225 (IVELLKYSGEQLERE). The BH2 signature appears at 307-314 (WIQQHGGW).

The protein belongs to the Bcl-2 family. Post-translationally, phosphorylated by MELK, leading to inhibit its pro-apoptotic function.

It is found in the cytoplasm. Its function is as follows. Plays a role in apoptosis. The protein is Apoptosis facilitator Bcl-2-like protein 14 (BCL2L14) of Bos taurus (Bovine).